The following is a 330-amino-acid chain: Probable cytosolic iron-sulfur protein assembly protein 1 (330 aa).

7 WD repeats span residues L12–I49, A56–F95, G105–E144, E151–V190, G195–Q236, V248–F286, and C292–A330.

The protein belongs to the WD repeat CIA1 family. As to quaternary structure, interacts with NAR1.

The protein localises to the cytoplasm. It localises to the nucleus. Its function is as follows. Essential component of the cytosolic iron-sulfur (Fe/S) protein assembly machinery. Required for the maturation of extramitochondrial Fe/S proteins. This is Probable cytosolic iron-sulfur protein assembly protein 1 from Saccharomyces cerevisiae (strain YJM789) (Baker's yeast).